A 196-amino-acid polypeptide reads, in one-letter code: Pantothenic acid transporter PanT (196 aa).

A run of 6 helical transmembrane segments spans residues 10–30 (AILA…QFVI), 35–55 (FPVK…ILGW), 58–78 (GAFL…IVTT), 99–119 (WGLF…YFVY), 131–151 (AAFA…FLFF), and 161–181 (YLLG…AVIL).

In E.coli forms a stable energy-coupling factor (ECF) transporter complex composed of 2 membrane-embedded substrate-binding protein (S component), 2 ATP-binding proteins (A and A' components) and 2 transmembrane proteins (T component), probably with a stoichiometry of 2:1:1:2. May be able to interact with more than 1 S component at a time.

It localises to the cell membrane. Probably a pantothenic acid-binding protein that interacts with the energy-coupling factor (ECF) ABC-transporter complex. Unlike classic ABC transporters this ECF transporter provides the energy necessary to transport a number of different substrates. The substrates themselves are bound by transmembrane, not extracytoplasmic soluble proteins. The protein is Pantothenic acid transporter PanT (panT) of Lactococcus lactis subsp. cremoris (strain MG1363).